The sequence spans 109 residues: Large ribosomal subunit protein uL24 (109 aa).

It belongs to the universal ribosomal protein uL24 family. As to quaternary structure, part of the 50S ribosomal subunit.

One of two assembly initiator proteins, it binds directly to the 5'-end of the 23S rRNA, where it nucleates assembly of the 50S subunit. Functionally, one of the proteins that surrounds the polypeptide exit tunnel on the outside of the subunit. The protein is Large ribosomal subunit protein uL24 of Rickettsia canadensis (strain McKiel).